An 89-amino-acid chain; its full sequence is Small ribosomal subunit protein uS15 (89 aa).

This sequence belongs to the universal ribosomal protein uS15 family. In terms of assembly, part of the 30S ribosomal subunit. Forms a bridge to the 50S subunit in the 70S ribosome, contacting the 23S rRNA.

Its function is as follows. One of the primary rRNA binding proteins, it binds directly to 16S rRNA where it helps nucleate assembly of the platform of the 30S subunit by binding and bridging several RNA helices of the 16S rRNA. Functionally, forms an intersubunit bridge (bridge B4) with the 23S rRNA of the 50S subunit in the ribosome. The protein is Small ribosomal subunit protein uS15 of Chlorobium phaeobacteroides (strain DSM 266 / SMG 266 / 2430).